A 141-amino-acid chain; its full sequence is Drosulfakinins (141 aa).

An N-terminal signal peptide occupies residues 1–31 (MGLRRCTHFATLVMPLWALALFFLVVMQVPA). Residues 32-73 (QTTSLQISKEDRRLQELESKMGAESEQPNANLVGPSISRFGD) constitute a propeptide that is removed on maturation. The interval 49–69 (ESKMGAESEQPNANLVGPSIS) is disordered. Phe-82 is subject to Phenylalanine amide. Residues 86-111 (VPLISRPMIPIELDLLMDNDDERTKA) constitute a propeptide that is removed on maturation. Tyr-117 carries the sulfotyrosine modification. Phe-122 bears the Phenylalanine amide mark. Tyr-134 is modified (sulfotyrosine). Phe-139 is subject to Phenylalanine amide.

This sequence belongs to the gastrin/cholecystokinin family.

Its subcellular location is the secreted. Functionally, drosulfakinin-0 (DSK 0) plays diverse biological roles including regulating gut muscle contraction in adults but not in larvae. The sequence is that of Drosulfakinins from Drosophila erecta (Fruit fly).